Reading from the N-terminus, the 433-residue chain is O-methyltransferase hasC (433 aa).

Residues glutamate 265 and 293–295 each bind S-adenosyl-L-methionine; that span reads GDF. Histidine 313 serves as the catalytic Proton acceptor. The segment at 413 to 433 is disordered; sequence SPRANGNGNSAGGLEWESELM.

Belongs to the class I-like SAM-binding methyltransferase superfamily. Cation-independent O-methyltransferase family. COMT subfamily.

The protein operates within secondary metabolite biosynthesis. Functionally, O-methyltransferase; part of the gene cluster that mediates the biosynthesis of hexadehydro-astechrome (HAS), a tryptophan-derived iron(III)-complex that acts as a virulence factor in infected mice. Within the pathway, hasC, with the cytochrome P450 monooxygenase hasH and the FAD-linked oxidoreductase hasG, convert the hasE-prenylated Trp-Ala-dipeptide into an O-methylated diketopiperazine that is then released from the hasD NRPS. The HAS biosynthesis begins with the synthesis of a tethered Trp-Ala dipeptide by the NRPS hasD. The 7-dimethylallyltryptophan synthase hasE then catalyzes the prenylation of the hasD-tethered tryptophan or the resulting tethered Trp-Ala dipeptide at the C-7 position of the indole moiety. HAS biosynthesis continues via tethered intermediates with the succesive actions of the cytochrome P450 monooxygenase hasH, the O-methyltransferase hasC, and the FAD-linked oxidoreductase hasG. The resulting O-methylated diketopiperazine is then released from hasD. Finally, three O-methylated diketopiperazine molecules assemble in a trimeric complex with Fe(III) to produce hexadehydro-astechrome. The sequence is that of O-methyltransferase hasC from Aspergillus fumigatus (strain CBS 144.89 / FGSC A1163 / CEA10) (Neosartorya fumigata).